The chain runs to 66 residues: Surface composition regulator (66 aa).

Belongs to the GlgS family.

Major determinant of cell surface composition. Negatively regulates motility, adhesion and synthesis of biofilm exopolysaccharides. This chain is Surface composition regulator, found in Escherichia coli O127:H6 (strain E2348/69 / EPEC).